Reading from the N-terminus, the 973-residue chain is Mediator of RNA polymerase II transcription subunit 16 (973 aa).

The protein belongs to the Mediator complex subunit 16 family. As to quaternary structure, component of the Mediator complex.

It localises to the nucleus. Functionally, component of the Mediator complex, a coactivator involved in the regulated transcription of nearly all RNA polymerase II-dependent genes. Mediator functions as a bridge to convey information from gene-specific regulatory proteins to the basal RNA polymerase II transcription machinery. Mediator is recruited to promoters by direct interactions with regulatory proteins and serves as a scaffold for the assembly of a functional preinitiation complex with RNA polymerase II and the general transcription factors. This is Mediator of RNA polymerase II transcription subunit 16 (SIN4) from Candida glabrata (strain ATCC 2001 / BCRC 20586 / JCM 3761 / NBRC 0622 / NRRL Y-65 / CBS 138) (Yeast).